The following is a 1443-amino-acid chain: MATQADDAAASQANIEDGDLKEHVHDELDKIQQQRSTATVFPEPLRESDSEDSDDEDNGPAQAPPMFMNMNQSIYGLIAQASNRVDFNDRFDGMSSDEEGESSQNTRTESIARTSILQPAGKGKDKVHRRRKLSEHKLLRSLPALPKLRSRHKSQHSTLPAPEEVADEADDEHGDGGLLPAPALTLTRQDTQDRLAPVMSRMLEAKADLSIRPSFDLDRLSSDVSRSSDSDEVSALSRKLKEIFEFDEYEQVIEEYPCWLLQSVLLQGYMYITSKHICFYAYLPKKTHEAVKSGYLSKSGKRNPSYARFWFRLKGDVLTYYKTATDVYFPHGQIDLRYGISASIVDTDKEALHFVVETRHRTYKFKADSAPSAKEWVKSLQRVIFRSHNDGDSVKISLPIKNVMDIEDTQMISFADTCKIRVIDNDETYAIDEYFFSFFSFGKEAINVLKILIEDSSGARSAEQVITGDDHDSSQPSSGHASKAASKRAPSKLSTGKLPDTVKATLAPMSPLSPRSPSQLSPRASMDAPRSSFDGFRRFGKKSLDVTSSIGDHSPRRSFSGRRSTSHQHRQGTTTPKQAHDSEDSFLQSSIENPSISTLSPSSYDEPSASQILQGSDVFHSPMMRRSASTSRKRDRSGKRTPRSSSAHGDRHHGIPHAATTGAIHKMGDEQADSQRPATPTLNSITKIGAYPLQRANAFAEYLSRTSQRMGSMFATESLGYVEKVHGMWKGEHRHYDEPQELRTDDDGEDIDSEADDKMQTTIDRFRAHFALPESEKLVATYFGAIFKVLPLYGKFYISDRSFCFRSLYPGTRTKLILPLKDIENVHKEKGFRYGYYGLTVVIRGHEELFFEFRKPGLRDDCAVTLHQLMETNRFLEQSGILDQEEQDDEEAAAAMAERDELQEARQDEFVDHELTLPRTTSGVSNAPTILFDNPNSSGLAFKPQKSMKITCLTIGSRGDIQPYIALCKGLLAEGHKPRIATHGEFQEWVESHGIEFARVEGDPGELMRLCIENGTFTWAFLREANSTFRGWLDDLLDSAYTACEGSELLIESPSAMAGIHIAEKLEIPYFRAFTMPWTRTRAYPHAFIMPEHKMGGAFNYMTYVMFDNIFWKATAYQVNRWRNKTLGLPSTSLEKMQPNKVPFLYNFSPSVVAPPLDFSDWIRVTGYWFLNEGGGDWKPPQELQDFIAKARADGKKIVYVGFGSIIVKDPAKMTQEVIDAVLKADVRCILSKGWSDRISPKDDPSKPPPDEPVIPAEIHVITSAPHDWLFSQIDAAAHHGGSGTTGASLRAGIPTIIRPFFGDQFFFSTRVEDLGVGVCVRKWGTNSFGRALWEVTRNERMIVKARVLGEQIRSESGVDNAIQCIYRDLEYAKSLIKRRAGKNNAEHGLAEDDDDTEESWTFVGRDEPDPDAVTKKLSDGLAGLGAAGDRPPPLGSQAPTVA.

Positions 1–13 are enriched in low complexity; that stretch reads MATQADDAAASQA. Disordered regions lie at residues 1-69 and 88-187; these read MATQ…MFMN and NDRF…LTLT. Positions 18 to 32 are enriched in basic and acidic residues; it reads GDLKEHVHDELDKIQ. Residues 49–58 show a composition bias toward acidic residues; the sequence is DSEDSDDEDN. The span at 104–117 shows a compositional bias: polar residues; the sequence is QNTRTESIARTSIL. Positions 125-134 are enriched in basic residues; sequence DKVHRRRKLS. Residues 164–173 show a composition bias toward acidic residues; the sequence is EVADEADDEH. Residues 240–284 enclose the GRAM 1 domain; sequence LKEIFEFDEYEQVIEEYPCWLLQSVLLQGYMYITSKHICFYAYLP. The PH domain occupies 289–385; it reads EAVKSGYLSK…WVKSLQRVIF (97 aa). The tract at residues 463 to 657 is disordered; the sequence is EQVITGDDHD…HGDRHHGIPH (195 aa). Low complexity predominate over residues 506 to 525; it reads LAPMSPLSPRSPSQLSPRAS. Over residues 585 to 614 the composition is skewed to polar residues; the sequence is SFLQSSIENPSISTLSPSSYDEPSASQILQ. The segment covering 631-642 has biased composition (basic residues); sequence SRKRDRSGKRTP. In terms of domain architecture, GRAM 2 spans 765-870; sequence RFRAHFALPE…DCAVTLHQLM (106 aa). Residues 883 to 910 are a coiled coil; sequence DQEEQDDEEAAAAMAERDELQEARQDEF. UDP-alpha-D-glucose-binding residues include S957, R958, D960, A1265, H1267, H1280, S1283, G1284, T1285, D1304, and Q1305. Residues 1385-1443 are disordered; sequence NAEHGLAEDDDDTEESWTFVGRDEPDPDAVTKKLSDGLAGLGAAGDRPPPLGSQAPTVA. Residues 1405-1419 show a composition bias toward basic and acidic residues; that stretch reads GRDEPDPDAVTKKLS.

This sequence belongs to the glycosyltransferase 28 family.

It is found in the cytoplasm. The protein resides in the preautophagosomal structure membrane. The catalysed reaction is a sterol + UDP-alpha-D-glucose = a sterol 3-beta-D-glucoside + UDP + H(+). It carries out the reaction ergosterol + UDP-alpha-D-glucose = ergosteryl 3-beta-D-glucoside + UDP + H(+). Functionally, sterol glycosyltransferase responsible for the glycosylation of ergosterol to form ergosterol-glucoside. This chain is Sterol 3-beta-glucosyltransferase ATG26, found in Gibberella zeae (strain ATCC MYA-4620 / CBS 123657 / FGSC 9075 / NRRL 31084 / PH-1) (Wheat head blight fungus).